Consider the following 368-residue polypeptide: Alanine racemase (368 aa).

Residue Lys-35 is the Proton acceptor; specific for D-alanine of the active site. At Lys-35 the chain carries N6-(pyridoxal phosphate)lysine. Arg-130 contacts substrate. The active-site Proton acceptor; specific for L-alanine is the Tyr-253. Residue Met-305 participates in substrate binding.

The protein belongs to the alanine racemase family. Pyridoxal 5'-phosphate is required as a cofactor.

It carries out the reaction L-alanine = D-alanine. It functions in the pathway amino-acid biosynthesis; D-alanine biosynthesis; D-alanine from L-alanine: step 1/1. Its function is as follows. Catalyzes the interconversion of L-alanine and D-alanine. May also act on other amino acids. In Cupriavidus metallidurans (strain ATCC 43123 / DSM 2839 / NBRC 102507 / CH34) (Ralstonia metallidurans), this protein is Alanine racemase (alr).